The following is a 79-amino-acid chain: uncharacterized protein (79 aa).

The tract at residues 1-37 is disordered; that stretch reads MQLDVFSRMMFGDAAKPTEEKEEEQQEEVSQVSQTND.

This is an uncharacterized protein from Bacillus subtilis (strain 168).